Reading from the N-terminus, the 390-residue chain is Putative F-box protein At3g52320 (390 aa).

Residues 21-71 (VVFLPEIPEEMLIDILIRLPAKSLMRFKCVSKLWLSLITSRYFTNRFFKPS) enclose the F-box domain.

This chain is Putative F-box protein At3g52320, found in Arabidopsis thaliana (Mouse-ear cress).